The sequence spans 226 residues: Small ribosomal subunit protein uS5 (226 aa).

The disordered stretch occupies residues 1-71; that stretch reads MEDIKHNKKP…RKNEKRTKSE (71 aa). A compositionally biased stretch (low complexity) spans 24 to 54; the sequence is ANPQANHANPNNRSASVNNNSVNNNKKNSSR. An S5 DRBM domain is found at 72–135; it reads FEEKIVKISR…KMAENNVQKI (64 aa).

This sequence belongs to the universal ribosomal protein uS5 family. As to quaternary structure, part of the 30S ribosomal subunit. Contacts proteins S4 and S8.

With S4 and S12 plays an important role in translational accuracy. In terms of biological role, located at the back of the 30S subunit body where it stabilizes the conformation of the head with respect to the body. In Mycoplasmoides gallisepticum (strain R(low / passage 15 / clone 2)) (Mycoplasma gallisepticum), this protein is Small ribosomal subunit protein uS5.